Consider the following 216-residue polypeptide: 3-isopropylmalate dehydratase small subunit (216 aa).

It belongs to the LeuD family. LeuD type 1 subfamily. In terms of assembly, heterodimer of LeuC and LeuD.

It carries out the reaction (2R,3S)-3-isopropylmalate = (2S)-2-isopropylmalate. It participates in amino-acid biosynthesis; L-leucine biosynthesis; L-leucine from 3-methyl-2-oxobutanoate: step 2/4. In terms of biological role, catalyzes the isomerization between 2-isopropylmalate and 3-isopropylmalate, via the formation of 2-isopropylmaleate. The protein is 3-isopropylmalate dehydratase small subunit of Psychrobacter sp. (strain PRwf-1).